We begin with the raw amino-acid sequence, 135 residues long: Large ribosomal subunit protein eL27z (135 aa).

Belongs to the eukaryotic ribosomal protein eL27 family.

The polypeptide is Large ribosomal subunit protein eL27z (RPL27A) (Arabidopsis thaliana (Mouse-ear cress)).